We begin with the raw amino-acid sequence, 456 residues long: Adenylyltransferase and sulfurtransferase uba4 (456 aa).

Residues glycine 101, aspartate 122, 129–133 (SNLHR), lysine 146, and 161–162 (DH) contribute to the ATP site. The Zn(2+) site is built by cysteine 210 and cysteine 213. Cysteine 227 (glycyl thioester intermediate; for adenylyltransferase activity) is an active-site residue. Positions 300 and 303 each coordinate Zn(2+). One can recognise a Rhodanese domain in the interval 350–454 (KEKEHLLIDV…WKEQVDGSWP (105 aa)). Cysteine 409 acts as the Cysteine persulfide intermediate; for sulfurtransferase activity in catalysis.

It in the N-terminal section; belongs to the HesA/MoeB/ThiF family. UBA4 subfamily. The cofactor is Zn(2+).

The protein localises to the cytoplasm. It localises to the cytosol. It carries out the reaction [molybdopterin-synthase sulfur-carrier protein]-C-terminal Gly-Gly + ATP + H(+) = [molybdopterin-synthase sulfur-carrier protein]-C-terminal Gly-Gly-AMP + diphosphate. The catalysed reaction is [molybdopterin-synthase sulfur-carrier protein]-C-terminal Gly-Gly-AMP + S-sulfanyl-L-cysteinyl-[cysteine desulfurase] + AH2 = [molybdopterin-synthase sulfur-carrier protein]-C-terminal-Gly-aminoethanethioate + L-cysteinyl-[cysteine desulfurase] + A + AMP + 2 H(+). It participates in tRNA modification; 5-methoxycarbonylmethyl-2-thiouridine-tRNA biosynthesis. Functionally, plays a central role in 2-thiolation of mcm(5)S(2)U at tRNA wobble positions of cytosolic tRNA(Lys), tRNA(Glu) and tRNA(Gln). Also essential during biosynthesis of the molybdenum cofactor. Acts by mediating the C-terminal thiocarboxylation of sulfur carriers urm1 and mocs2a. Its N-terminus first activates urm1 and mocs2a as acyl-adenylates (-COAMP), then the persulfide sulfur on the catalytic cysteine is transferred to urm1 and mocs2a to form thiocarboxylation (-COSH) of their C-terminus. The reaction probably involves hydrogen sulfide that is generated from the persulfide intermediate and that acts as a nucleophile towards urm1 and mocs2a. Subsequently, a transient disulfide bond is formed. Does not use thiosulfate as sulfur donor; nfs1 probably acting as a sulfur donor for thiocarboxylation reactions. In Sclerotinia sclerotiorum (strain ATCC 18683 / 1980 / Ss-1) (White mold), this protein is Adenylyltransferase and sulfurtransferase uba4.